A 258-amino-acid chain; its full sequence is MERLTIVKVGGEIIRIPEVRDSFLKDFSIIAGYKILVHGGGSMLTELARNLDIETQMIDGRRVTTEKILKLAVMVYAGLINKEIVVGLQALGVDALGFTGADSNIICSEKRPIRDSIDYGLVGDIQEINVQLLNEFLNKGHTPIFAPITHNGGGQLLNTNADSIAGELAKVLVYDYNVRLVYCFDKKGVLYDEGDENSFISVLSYTDFQRYKENGIIGGGMLPKLDSAFNALSAGVKEVIITCASNIKHTGSGTHLKL.

Substrate is bound by residues 40–41 (GG), R62, and N158.

This sequence belongs to the acetylglutamate kinase family. ArgB subfamily.

The protein resides in the cytoplasm. It carries out the reaction N-acetyl-L-glutamate + ATP = N-acetyl-L-glutamyl 5-phosphate + ADP. It participates in amino-acid biosynthesis; L-arginine biosynthesis; N(2)-acetyl-L-ornithine from L-glutamate: step 2/4. Functionally, catalyzes the ATP-dependent phosphorylation of N-acetyl-L-glutamate. In Azobacteroides pseudotrichonymphae genomovar. CFP2, this protein is Acetylglutamate kinase.